The chain runs to 229 residues: MNGEFGMRPRAIVLLSGGLDSTTCLAWAQARYECMALSFMYGQRSTTELDAAKAIAQNAGVEHRVINIDLANLGGSALTDHNIDVPEQLQEGIPVTYVPARNTIFLSYALAAAEVFGAEAIVIGVNAVDYSGYPDCRPEYIQAFTNMARLATKAGVEGKPLTFETPLLHLSKANIIRLGIEHGVDYSQTVSCYQADAQGRACGKCDSCRLRKQGFIEAGVTDPTRYIPQ.

15-25 (LSGGLDSTTCL) lines the ATP pocket. Residues Cys-192, Cys-202, Cys-205, and Cys-208 each coordinate Zn(2+).

It belongs to the QueC family. The cofactor is Zn(2+).

It carries out the reaction 7-carboxy-7-deazaguanine + NH4(+) + ATP = 7-cyano-7-deazaguanine + ADP + phosphate + H2O + H(+). The protein operates within purine metabolism; 7-cyano-7-deazaguanine biosynthesis. Its function is as follows. Catalyzes the ATP-dependent conversion of 7-carboxy-7-deazaguanine (CDG) to 7-cyano-7-deazaguanine (preQ(0)). In Acinetobacter baylyi (strain ATCC 33305 / BD413 / ADP1), this protein is 7-cyano-7-deazaguanine synthase.